Consider the following 128-residue polypeptide: Azurin (128 aa).

The Plastocyanin-like domain maps to 1–128; that stretch reads AECSVDIQGN…ALMKGTLTLK (128 aa). Cys-3 and Cys-26 are disulfide-bonded. Positions 46, 112, 117, and 121 each coordinate Cu cation.

The protein localises to the periplasm. Its function is as follows. Transfers electrons from cytochrome c551 to cytochrome oxidase. This chain is Azurin, found in Pseudomonas aeruginosa.